The primary structure comprises 432 residues: Putative D-alanyl-D-alanine carboxypeptidase (432 aa).

The chain crosses the membrane as a helical; Signal-anchor span at residues 7-25; it reads ATVLLTFSLSAFAVEYPVL.

This sequence belongs to the peptidase S12 family. YfeW subfamily.

The protein resides in the cell inner membrane. It catalyses the reaction Preferential cleavage: (Ac)2-L-Lys-D-Ala-|-D-Ala. Also transpeptidation of peptidyl-alanyl moieties that are N-acyl substituents of D-alanine.. In Salmonella typhi, this protein is Putative D-alanyl-D-alanine carboxypeptidase.